Reading from the N-terminus, the 525-residue chain is Light-independent protochlorophyllide reductase subunit B (525 aa).

Asp36 contacts [4Fe-4S] cluster. Asp286 serves as the catalytic Proton donor. 421 to 422 serves as a coordination point for substrate; it reads GL.

Belongs to the ChlB/BchB/BchZ family. As to quaternary structure, protochlorophyllide reductase is composed of three subunits; ChlL, ChlN and ChlB. Forms a heterotetramer of two ChlB and two ChlN subunits. The cofactor is [4Fe-4S] cluster.

It catalyses the reaction chlorophyllide a + oxidized 2[4Fe-4S]-[ferredoxin] + 2 ADP + 2 phosphate = protochlorophyllide a + reduced 2[4Fe-4S]-[ferredoxin] + 2 ATP + 2 H2O. It participates in porphyrin-containing compound metabolism; chlorophyll biosynthesis (light-independent). Its function is as follows. Component of the dark-operative protochlorophyllide reductase (DPOR) that uses Mg-ATP and reduced ferredoxin to reduce ring D of protochlorophyllide (Pchlide) to form chlorophyllide a (Chlide). This reaction is light-independent. The NB-protein (ChlN-ChlB) is the catalytic component of the complex. This Prochlorococcus marinus (strain NATL1A) protein is Light-independent protochlorophyllide reductase subunit B.